Consider the following 362-residue polypeptide: S-adenosylmethionine:tRNA ribosyltransferase-isomerase (362 aa).

This sequence belongs to the QueA family. As to quaternary structure, monomer.

The protein localises to the cytoplasm. It carries out the reaction 7-aminomethyl-7-carbaguanosine(34) in tRNA + S-adenosyl-L-methionine = epoxyqueuosine(34) in tRNA + adenine + L-methionine + 2 H(+). Its pathway is tRNA modification; tRNA-queuosine biosynthesis. Transfers and isomerizes the ribose moiety from AdoMet to the 7-aminomethyl group of 7-deazaguanine (preQ1-tRNA) to give epoxyqueuosine (oQ-tRNA). The sequence is that of S-adenosylmethionine:tRNA ribosyltransferase-isomerase from Xanthobacter autotrophicus (strain ATCC BAA-1158 / Py2).